Reading from the N-terminus, the 2129-residue chain is MEMESDNSDDEGSIGNGLDLTGILFGNIDSEGRLLQDDDGEGRGGTGFDAELRENIGSLSKLGLDSMLLEVIDLKEAEPPSDDEEEEDARPSAVSASEGMSAFDALKAGVKREDGAVKAQDDAIDYSDITELSEDCPRTPPEETSTYDDLEDAIPASKVEAKLTKDDKELMPPPSAPMRSGSGGGIEEPAKSNDASSPSDDSKSTDSKDADRKLDTPLADILPSKYQNVDVRELFPDFRPQKVLRFSRLFGPGKPTSLPQIWRHVRKRRRKRNQSRDQKTTNTGGSDSPSDTEEPRKRGFSLHYAAEPTPAECMSDDEDKLLGDFNSEDVRPEGPDNGENSDQKPKVADWRFGPAQIWYDMLEVPDSGEGFNYGFKTKAASTSSQPQLKDERRVKSPEDDVEDPSIADDAFLMVSQLHWEDDVVWDGNDIKAKVLQKLNSKTNAAGWLPSSGSRTAGAFSQPGKPSMPVGSGSSKQGSGASSKKAQQNAQAKPAEAPDDTWYSLFPVENEELIYYKWEDEVIWDAQQVSKVPKPKVLTLDPNDENIILGIPDDIDPSKINKSTGPPPKIKIPHPHVKKSKILLGKAGVINVLAEDTPPPPPKSPDRDPFNISNDTYYTPKTEPTLRLKVGGNLIQHSTPVVELRAPFVPTHMGPMKLRAFHRPPLKKYSHGPMAQSIPHPVFPLLKTIAKKAKQREVERIASGGGDVFFMRNPEDLSGRDGDIVLAEFCEEHPPLINQVGMCSKIKNYYKRKAEKDSGPQDFVYGEVAFAHTSPFLGILHPGQCIQAIENNMYRAPIYPHKMAHNDFLVIRTRNNYWIRSVNSIYTVGQECPLYEVPGPNSKRANNFTRDFLQVFIYRLFWKSRDNPRRIRMDDIKQAFPAHSESSIRKRLKQCADFKRTGMDSNWWVIKPEFRLPSEEEIRAMVSPEQCCAYFSMIAAEQRLKDAGYGEKFLFAPQEDDDEEAQLKLDDEVKVAPWNTTRAYIQAMRGKCLLQLSGPADPTGCGEGFSYVRVPNKPTQTKEEQESQPKRSVTGTDADLRRLPLQRAKELLRQFKVPEEEIKKLSRWEVIDVVRTLSTEKAKAGEEGMDKFSRGNRFSIAEHQERYKEECQRIFDLQNRVLASSEVLSTDEAESSASEESDLEELGKNLENMLSNKKTSTQLSREREELERQELLRQLDEEHGGPSGSGGAKGAKGKDDPGQQMLATNNQGRILRITRTFRGNDGKEYTRVETVRRQPVIDAYIKIRTTKDEQFIKQFATLDEQQKEEMKREKRRIQEQLRRIKRNQERERLAQLAQNQKLQPGGMPTSLGDPKSSGGHSHKERDSGYKEVSPSRKKFKLKPDLKLKCGACGQVGHMRTNKACPLYSGMQSSLSQSNPSLADDFDEQSEKEMTMDDDDLVNVDGTKVTLSSKILKRHGGDDGKRRSGSSSGFTLKVPRDAMGKKKRRVGGDLHCDYLQRHNKTANRRRTDPVVVLSSILEIIHNELRSMPDVSPFLFPVSAKKVPDYYRVVTKPMDLQTMREYIRQRRYTSREMFLEDLKQIVDNSLIYNGPQSAYTLAAQRMFSSCFELLAEREDKLMRLEKAINPLLDDDDQVALSFIFDKLHSQIKQLPESWPFLKPVNKKQVKDYYTVIKRPMDLETIGKNIEAHRYHSRAEYLADIELIATNCEQYNGSDTRYTKFSKKILEYAQTQLIEFSEHCGQLENNIAKTQERARENAPEFDEAWGNDDYNFDRGSRASSPGDDYIDVEGHGGHASSSNSIHRSMGAEAGSSHTAPAVRKPAPPGPGEVKRGRGRPRKQRDPVEEVKSQNPVKRGRGRPRKDSLASNMSHTQAYFLDEDLQCSTDDEDDDEEEDFQEVSEDENNAASILDQGERINAPADAMDGMFDPKNIKTEIDLEAHQMAEEPIGEDDSQQVAEAMVQLSGVGGYYAQQQQDESMDVDPNYDPSDFLAMHKQRQSLGEPSSLQGAFTNFLSHEQDDNGPYNPAEASTSAASGADLGMDASMAMQMAPEMPVNTMNNGMGIDDDLDISESDEEDDGSRVRIKKEVFDDGDYALQHQQMGQAASQSQIYMVDSSNEPTTLDYQQPPQLDFQQVQEMEQLQHQVMPPMQSEQLQQQQTPQGDNDYAWTF.

The Protein kinase 1 domain occupies 1 to 423 (MEMESDNSDD…VSQLHWEDDV (423 aa)). Disordered stretches follow at residues 77-233 (AEPP…DVRE), 246-348 (FSRL…PKVA), 377-405 (TKAA…EDPS), and 445-497 (AGWL…AEAP). Residues 79 to 88 (PPSDDEEEED) show a composition bias toward acidic residues. Composition is skewed to basic and acidic residues over residues 110 to 121 (VKREDGAVKAQD), 159 to 170 (VEAKLTKDDKEL), and 200 to 215 (DDSK…RKLD). A compositionally biased stretch (basic residues) spans 263–273 (RHVRKRRRKRN). Residues 280-289 (TTNTGGSDSP) are compositionally biased toward polar residues. Ser286, Ser288, and Ser290 each carry phosphoserine. Ser315 is modified (phosphoserine; by autocatalysis). Residues 388–398 (LKDERRVKSPE) are compositionally biased toward basic and acidic residues. Residues 470-494 (GSGSSKQGSGASSKKAQQNAQAKPA) are compositionally biased toward low complexity. Ser603 carries the post-translational modification Phosphoserine. Disordered regions lie at residues 1016-1038 (KPTQ…TDAD), 1149-1208 (LENM…LATN), 1296-1336 (AQNQ…PSRK), 1368-1391 (GMQS…SEKE), and 1415-1435 (KRHG…FTLK). Positions 1019-1028 (QTKEEQESQP) are enriched in basic and acidic residues. Positions 1151–1160 (NMLSNKKTST) are enriched in polar residues. Basic and acidic residues predominate over residues 1163 to 1183 (SREREELERQELLRQLDEEHG). Positions 1184–1193 (GPSGSGGAKG) are enriched in gly residues. Positions 1368 to 1379 (GMQSSLSQSNPS) are enriched in polar residues. The Nuclear localization signal motif lies at 1442–1448 (GKKKRRV). 2 consecutive Bromo domains span residues 1466 to 1574 (RRRT…LAER) and 1588 to 1696 (LLDD…LIEF). Residues 1515 to 2065 (MDLQTMREYI…QHQQMGQAAS (551 aa)) enclose the Protein kinase 2 domain. Disordered stretches follow at residues 1710–1872 (TQER…LDQG), 1973–1992 (LSHE…STSA), 2018–2042 (NNGM…SRVR), and 2101–2129 (QHQV…AWTF). Ser1740 is subject to Phosphoserine. The segment covering 1836–1863 (LDEDLQCSTDDEDDDEEEDFQEVSEDEN) has biased composition (acidic residues). A compositionally biased stretch (acidic residues) spans 2023 to 2037 (IDDDLDISESDEEDD). A compositionally biased stretch (low complexity) spans 2101–2120 (QHQVMPPMQSEQLQQQQTPQ).

It belongs to the TAF1 family. As to quaternary structure, belongs to the TFIID complex which is composed of TATA binding protein (Tbp) and a number of TBP-associated factors (Tafs). Taf1 is the largest component of the TFIID complex. Interacts with Tbp, Taf2, Taf4 and Taf6. Mg(2+) serves as cofactor.

It is found in the nucleus. The enzyme catalyses L-seryl-[protein] + ATP = O-phospho-L-seryl-[protein] + ADP + H(+). The catalysed reaction is L-threonyl-[protein] + ATP = O-phospho-L-threonyl-[protein] + ADP + H(+). With respect to regulation, autophosphorylates on Ser residues. Its function is as follows. TFIID is a multimeric protein complex that plays a central role in mediating promoter responses to various activators and repressors. Largest component and core scaffold of the complex. Contains N- and C-terminal Ser/Thr kinase domains which can autophosphorylate or transphosphorylate other transcription factors. Possesses DNA-binding activity. Essential for progression of the G1 phase of the cell cycle. Negative regulator of the TATA box-binding activity of Tbp. The sequence is that of Transcription initiation factor TFIID subunit 1 (Taf1) from Drosophila melanogaster (Fruit fly).